The sequence spans 317 residues: Large ribosomal subunit protein uL10 (317 aa).

The protein belongs to the universal ribosomal protein uL10 family. As to quaternary structure, P0 forms a pentameric complex by interaction with dimers of P1 and P2. Phosphorylated.

Functionally, ribosomal protein P0 is the functional equivalent of E.coli protein L10. The polypeptide is Large ribosomal subunit protein uL10 (rplp0) (Ictalurus punctatus (Channel catfish)).